Here is a 642-residue protein sequence, read N- to C-terminus: Sec1 family domain-containing protein 1 (642 aa).

Ala2 is modified (N-acetylalanine). Phosphoserine occurs at positions 37, 303, and 528.

It belongs to the STXBP/unc-18/SEC1 family. As to quaternary structure, interacts with STX17. Interacts with STX5A. Interacts with the COG complex via COG4.

It localises to the cytoplasm. Its subcellular location is the endoplasmic reticulum membrane. The protein resides in the golgi apparatus. The protein localises to the golgi stack membrane. Functionally, plays a role in SNARE-pin assembly and Golgi-to-ER retrograde transport via its interaction with COG4. Involved in vesicular transport between the endoplasmic reticulum and the Golgi. The sequence is that of Sec1 family domain-containing protein 1 (SCFD1) from Homo sapiens (Human).